The chain runs to 95 residues: MAILMLSLQLILLLIPSISHEAHKTSLSSWKHDQDWANVSNMTFSNGKLRVKGIYYRNADICSRHRVTSAGLTLQDLQLWCNLRSVARGQIPSTL.

The first 19 residues, 1 to 19 (MAILMLSLQLILLLIPSIS), serve as a signal peptide directing secretion. N-linked (GlcNAc...) asparagine glycosylation is found at Asn38 and Asn41.

It is found in the secreted. This is an uncharacterized protein from Homo sapiens (Human).